The following is a 488-amino-acid chain: Metalloreductase STEAP3 (488 aa).

Residues 1–207 (MSGEMDKPLI…AREVEAIPLR (207 aa)) lie on the Cytoplasmic side of the membrane. Phosphoserine occurs at positions 11, 17, and 20. NADP(+) is bound by residues 36–39 (SGDF), 58–59 (SR), 91–98 (VFREHYSS), asparagine 116, and alanine 151. FAD is bound by residues tryptophan 152 and aspartate 160. A helical membrane pass occupies residues 208–228 (LLPSWKVPTLLALGLFVCFYA). A Fe(3+)-binding site is contributed by tyrosine 229. Topologically, residues 229 to 258 (YNFIRDVLQPYIRKDENKFYKMPLSVVNTT) are vesicular. An N-linked (GlcNAc...) asparagine glycan is attached at asparagine 256. A helical transmembrane segment spans residues 259–279 (LPCVAYVLLSLVYLPGVLAAA). The Ferric oxidoreductase domain maps to 259–407 (LPCVAYVLLS…LGFVALMLST (149 aa)). Over 280–304 (LQLRRGTKYQRFPDWLDHWLQHRKQ) the chain is Cytoplasmic. FAD-binding residues include glutamine 281, arginine 302, and lysine 303. The helical transmembrane segment at 305–325 (IGLLSFFFAMLHALYSFCLPL) threads the bilayer. A heme b-binding site is contributed by histidine 316. Residue tyrosine 319 coordinates Fe(3+). The Vesicular segment spans residues 326–358 (RRSHRYDLVNLAVKQVLANKSRLWVEEEVWRME). A helical transmembrane segment spans residues 359 to 379 (IYLSLGVLALGMLSLLAVTSI). Serine 378 lines the FAD pocket. Residues 380–390 (PSIANSLNWKE) lie on the Cytoplasmic side of the membrane. Residues 391–411 (FSFVQSTLGFVALMLSTMHTL) form a helical membrane-spanning segment. Position 395 (glutamine 395) interacts with FAD. Histidine 409 provides a ligand contact to heme b. The Vesicular portion of the chain corresponds to 412–433 (TYGWTRAFEENHYKFYLPPTFT). A helical transmembrane segment spans residues 434–454 (LTLLLPCVIILAKGLFLLPCL). The Cytoplasmic segment spans residues 455 to 488 (SHRLTKIRRGWERDGAVKFMLPAGHTQGEKTSHV). Serine 486 carries the post-translational modification Phosphoserine.

The protein belongs to the STEAP family. In terms of assembly, homodimer. Interacts with BNIP3L, MYT1, RHBDL4/RHBDD1 and TCTP. FAD serves as cofactor. The cofactor is heme b. Proteolytically cleaved by RHBDL4/RHBDD1. RHBDL4/RHBDD1-induced cleavage occurs at multiple sites in a glycosylation-independent manner. In terms of processing, glycosylated.

It is found in the endosome membrane. The catalysed reaction is 2 Fe(2+) + NADP(+) + H(+) = 2 Fe(3+) + NADPH. It carries out the reaction 2 Cu(+) + NADP(+) + H(+) = 2 Cu(2+) + NADPH. In terms of biological role, integral membrane protein that functions as a NADPH-dependent ferric-chelate reductase, using NADPH from one side of the membrane to reduce a Fe(3+) chelate that is bound on the other side of the membrane. Mediates sequential transmembrane electron transfer from NADPH to FAD and onto heme, and finally to the Fe(3+) chelate. Can also reduce Cu(2+) to Cu(1+). Mediates efficient transferrin-dependent iron uptake in erythroid cells. May play a role downstream of p53/TP53 to interface apoptosis and cell cycle progression. Indirectly involved in exosome secretion by facilitating the secretion of proteins such as TCTP. This Rattus norvegicus (Rat) protein is Metalloreductase STEAP3 (Steap3).